Here is a 475-residue protein sequence, read N- to C-terminus: D(1B) dopamine receptor (475 aa).

The Extracellular segment spans residues 1-38 (MLPPGRNRTAQPARLGLQRQLAQVDAPAGSATPLGPAQ). The N-linked (GlcNAc...) asparagine glycan is linked to asparagine 7. Residues 39–64 (VVTAGLLTLLIVWTLLGNVLVCAAIV) form a helical membrane-spanning segment. Residues 65–75 (RSRHLRAKMTN) lie on the Cytoplasmic side of the membrane. Residues 76–102 (IFIVSLAVSDLFVALLVMPWKAVAEVA) traverse the membrane as a helical segment. Residues 103–111 (GYWPFGTFC) are Extracellular-facing. Cysteine 111 and cysteine 211 form a disulfide bridge. Residues 112 to 134 (DIWVAFDIMCSTASILNLCIISV) form a helical membrane-spanning segment. Over 135-153 (DRYWAISRPFRYERKMTQR) the chain is Cytoplasmic. A helical transmembrane segment spans residues 154-179 (VALVMVGLAWTLSILISFIPVQLNWH). Over 180–215 (RDKAGSQGQEGLLSNGTPWEEGWELEGRTENCDSSL) the chain is Extracellular. The chain crosses the membrane as a helical span at residues 216-240 (NRTYAISSSLISFYIPVAIMIVTYT). Residues 241–289 (RIYRIAQVQIRRISSLERAAEHAQSCRSRGAYEPDPSLRASIKKETKVF) lie on the Cytoplasmic side of the membrane. The helical transmembrane segment at 290–317 (KTLSMIMGVFVCCWLPFFILNCMVPFCS) threads the bilayer. Topologically, residues 318-335 (SGDAEGPKTGFPCVSETT) are extracellular. A helical membrane pass occupies residues 336–357 (FDIFVWFGWANSSLNPIIYAFN). At 358-475 (ADFRKVFAQL…LTPNCFDKTA (118 aa)) the chain is on the cytoplasmic side. Cysteine 370 is lipidated: S-palmitoyl cysteine. The interval 415–443 (SGDREVGEEEEEGPFDHMSQISPTTPDGD) is disordered.

The protein belongs to the G-protein coupled receptor 1 family. Brain, in the lateral mammillary nuclei, the anterior pretectal nuclei, and several layers of the hippocampus.

Its subcellular location is the cell membrane. In terms of biological role, dopamine receptor whose activity is mediated by G proteins which activate adenylyl cyclase. The sequence is that of D(1B) dopamine receptor (Drd5) from Rattus norvegicus (Rat).